We begin with the raw amino-acid sequence, 760 residues long: uncharacterized protein (760 aa).

Positions 578–587 (RNRKQSKLRI) are enriched in basic residues. The disordered stretch occupies residues 578–604 (RNRKQSKLRISKQQEIQPQKEESVKKE). Positions 595 to 604 (PQKEESVKKE) are enriched in basic and acidic residues.

It is found in the mitochondrion. This is an uncharacterized protein from Dictyostelium citrinum (Slime mold).